A 517-amino-acid polypeptide reads, in one-letter code: Meiosis-specific transcription factor mei4 (517 aa).

The fork-head DNA-binding region spans 81 to 172 (KPPCSYATLI…QNFVSVRLHR (92 aa)). A disordered region spans residues 170-278 (LHRSHSTDSN…PNAETQEDLP (109 aa)). Residues 209–223 (NSFNSSTSTSGSSSN) show a composition bias toward low complexity. The span at 230 to 246 (NDASQPSNQDSSLNSNI) shows a compositional bias: polar residues. The segment covering 254–270 (SNVQSNSSSSENVPKPN) has biased composition (low complexity).

It is found in the nucleus. Functionally, functions as a meiosis-specific transcription factor. Binds to the 5'-GTAAAYA-3' consensus sequence of the promoter of the spo6 gene. This is Meiosis-specific transcription factor mei4 (mei4) from Schizosaccharomyces pombe (strain 972 / ATCC 24843) (Fission yeast).